Here is a 165-residue protein sequence, read N- to C-terminus: uncharacterized protein (165 aa).

The tract at residues 49-165 (QLKPQGPKRP…VAQQREIAQK (117 aa)) is disordered. Over residues 94–106 (MNNNNNYKISYTS) the composition is skewed to polar residues. The span at 120-135 (TLQRTTPQAQPTPQQP) shows a compositional bias: low complexity. Residues 139 to 157 (SRSSGGITGAVNNRPQMVA) show a composition bias toward polar residues.

This is an uncharacterized protein from Caenorhabditis elegans.